Reading from the N-terminus, the 267-residue chain is Ribosomal RNA small subunit methyltransferase A (267 aa).

The S-adenosyl-L-methionine site is built by N13, L15, G39, E59, D87, and N106.

The protein belongs to the class I-like SAM-binding methyltransferase superfamily. rRNA adenine N(6)-methyltransferase family. RsmA subfamily.

The protein localises to the cytoplasm. It catalyses the reaction adenosine(1518)/adenosine(1519) in 16S rRNA + 4 S-adenosyl-L-methionine = N(6)-dimethyladenosine(1518)/N(6)-dimethyladenosine(1519) in 16S rRNA + 4 S-adenosyl-L-homocysteine + 4 H(+). In terms of biological role, specifically dimethylates two adjacent adenosines (A1518 and A1519) in the loop of a conserved hairpin near the 3'-end of 16S rRNA in the 30S particle. May play a critical role in biogenesis of 30S subunits. The protein is Ribosomal RNA small subunit methyltransferase A of Sulfurimonas denitrificans (strain ATCC 33889 / DSM 1251) (Thiomicrospira denitrificans (strain ATCC 33889 / DSM 1251)).